The following is a 516-amino-acid chain: Calcium and calcium/calmodulin-dependent serine/threonine-protein kinase (516 aa).

In terms of domain architecture, Protein kinase spans 13-298; the sequence is YEVVDVLGRG…ASDLLRHPWV (286 aa). ATP-binding positions include 19-27 and K43; that span reads LGRGGFSIV. Catalysis depends on D163, which acts as the Proton acceptor. Residue T263 is modified to Phosphothreonine. The segment at 321–334 is calmodulin-binding; sequence ARRKLRAAAIASVL. Positions 343 to 363 form a coiled coil; the sequence is KRLRNLLGTHDLTSEELDNLR. 3 EF-hand domains span residues 392 to 427, 428 to 463, and 470 to 505; these read SLIPLAPRVFDLFDNNRDGTVDMREILCGFSSLRNS, RGDDALRLCFQMYDADRSGCISKEELASMLRALPEE, and TEPGKLDEVFDQMDADSDGKVTFDEFKAAMNKDSAL. Positions 405, 407, 409, 411, 416, 441, 443, 445, 447, 452, 483, 485, 487, 489, and 494 each coordinate Ca(2+).

It belongs to the protein kinase superfamily. CAMK Ser/Thr protein kinase family. CaMK subfamily. Post-translationally, autophosphorylation. Mainly expressed in roots and panicles. Detected in leaves, shoots and culms.

The protein localises to the nucleus. It is found in the cytoplasm. Its subcellular location is the cell membrane. It catalyses the reaction L-seryl-[protein] + ATP = O-phospho-L-seryl-[protein] + ADP + H(+). The catalysed reaction is L-threonyl-[protein] + ATP = O-phospho-L-threonyl-[protein] + ADP + H(+). Calcium- and calmodulin-dependent protein kinase required for arbuscular mycorrhizal (AM) symbiosis. Involved in response to water deprivation stress. Required for abscisic acid-induced antioxidant defense and oxidative stress tolerance during dehydration stress. Functions upstream of MPK1 in an abscisic acid signaling pathway that regulates the activities of antioxidant enzymes and the production of hydrogen peroxide. The polypeptide is Calcium and calcium/calmodulin-dependent serine/threonine-protein kinase (CCAMK) (Oryza sativa subsp. japonica (Rice)).